The chain runs to 237 residues: Probable transcriptional regulatory protein Exig_1693 (237 aa).

It belongs to the TACO1 family. YeeN subfamily.

It localises to the cytoplasm. The protein is Probable transcriptional regulatory protein Exig_1693 of Exiguobacterium sibiricum (strain DSM 17290 / CCUG 55495 / CIP 109462 / JCM 13490 / 255-15).